Reading from the N-terminus, the 108-residue chain is Structural protein 1 (108 aa).

Topologically, residues 1 to 77 are intravirion; it reads MSRVSEYGVP…LKMQMDRLCN (77 aa). The helical; Signal-anchor for type II membrane protein transmembrane segment at 78–98 threads the bilayer; the sequence is VLGVVLQMATLALVTYIAFVV. Residues 99 to 108 lie on the Virion surface side of the membrane; that stretch reads HTRATSCKRE.

The protein belongs to the varicellovirus ORF1 protein family. In terms of assembly, homodimer. Post-translationally, phosphorylated.

Its subcellular location is the virion membrane. It is found in the host Golgi apparatus membrane. The polypeptide is Structural protein 1 (Homo sapiens (Human)).